Reading from the N-terminus, the 138-residue chain is Gamma-glutamylaminecyclotransferase (138 aa).

Glu63 functions as the Proton acceptor in the catalytic mechanism.

Belongs to the gamma-glutamylcyclotransferase family.

The enzyme catalyses epsilon-(gamma-L-glutamyl)-L-lysine = 5-oxo-L-proline + L-lysine. In terms of biological role, may contribute to degradation of proteins cross-linked by transglutaminases by degrading the cross-link between a lysine and a glutamic acid residue. Catalyzes the formation of 5-oxo-L-proline from L-gamma-glutamyl-L-epsilon-lysine. In Xenopus laevis (African clawed frog), this protein is Gamma-glutamylaminecyclotransferase (ggact).